Reading from the N-terminus, the 877-residue chain is GTPase activating protein homolog 2 (877 aa).

The 272-residue stretch at 14-285 (FKFTDNLWDG…SVEMIDITND (272 aa)) folds into the F-BAR domain. A coiled-coil region spans residues 130-214 (QEGIKLKQDM…SNCDEEYREQ (85 aa)). In terms of domain architecture, Rho-GAP spans 374-560 (VSLDELMNRQ…TLIKQIPPPL (187 aa)). Disordered regions lie at residues 589–612 (DQLSNDDNNNSNTNTSNISIGSGS), 644–704 (LPPL…AEPT), and 749–800 (AATP…LAST). Composition is skewed to low complexity over residues 593–612 (NDDNNNSNTNTSNISIGSGS), 653–676 (SGSGNESNSSSSNSTTTPTGSPTT), and 749–779 (AATPTTTTPTTTPTTTTSPTTATIPAVSTST). The span at 780–800 (IKTSSPDRTTPLTSSPPLAST) shows a compositional bias: polar residues.

The protein localises to the cytoplasm. The protein resides in the contractile vacuole. Functionally, rho GTPase-activating protein involved in the signal transduction pathway. Regulator of the contractile vacuole network as well as involved in driving vacuole emptying. The polypeptide is GTPase activating protein homolog 2 (mgp2) (Dictyostelium discoideum (Social amoeba)).